A 99-amino-acid polypeptide reads, in one-letter code: uncharacterized protein (99 aa).

A signal peptide spans 1–17; it reads MMMNAFFPAMALMVLVG. C18 carries the N-palmitoyl cysteine lipid modification. Residue C18 is the site of S-diacylglycerol cysteine attachment.

It localises to the cell membrane. This is an uncharacterized protein from Shigella flexneri.